The sequence spans 950 residues: Bifunctional glutamine synthetase adenylyltransferase/adenylyl-removing enzyme (950 aa).

The interval 1 to 440 (MLPLPSELQI…VFDHLIGDDA (440 aa)) is adenylyl removase. An adenylyl transferase region spans residues 449-950 (HGLYKSLWQD…KWLVAAPSDV (502 aa)).

This sequence belongs to the GlnE family. Mg(2+) serves as cofactor.

The catalysed reaction is [glutamine synthetase]-O(4)-(5'-adenylyl)-L-tyrosine + phosphate = [glutamine synthetase]-L-tyrosine + ADP. The enzyme catalyses [glutamine synthetase]-L-tyrosine + ATP = [glutamine synthetase]-O(4)-(5'-adenylyl)-L-tyrosine + diphosphate. Functionally, involved in the regulation of glutamine synthetase GlnA, a key enzyme in the process to assimilate ammonia. When cellular nitrogen levels are high, the C-terminal adenylyl transferase (AT) inactivates GlnA by covalent transfer of an adenylyl group from ATP to specific tyrosine residue of GlnA, thus reducing its activity. Conversely, when nitrogen levels are low, the N-terminal adenylyl removase (AR) activates GlnA by removing the adenylyl group by phosphorolysis, increasing its activity. The regulatory region of GlnE binds the signal transduction protein PII (GlnB) which indicates the nitrogen status of the cell. In Yersinia enterocolitica serotype O:8 / biotype 1B (strain NCTC 13174 / 8081), this protein is Bifunctional glutamine synthetase adenylyltransferase/adenylyl-removing enzyme.